The sequence spans 576 residues: Putative pentatricopeptide repeat-containing protein At5g47460 (576 aa).

PPR repeat units follow at residues 20-53 (SSNS…GEKP), 54-88 (DASP…GFVS), 89-119 (NTRL…MPDP), 120-154 (DVIS…DVFP), 155-189 (NEFS…GLEK), 191-225 (NVVV…DTVS), 226-252 (WNAI…MPNP), 253-287 (DTVT…NSSS), 288-318 (WNTI…GVRF), 319-353 (DEYS…GLDS), 354-384 (RVVV…MPRK), 385-419 (NLIV…RFLK), 421-452 (DRFT…MINE), and 458-488 (SVEH…FGFG). Residues 493–570 (AWRALLGACS…EVGSSWIDSR (78 aa)) are type E motif.

It belongs to the PPR family. PCMP-E subfamily.

In Arabidopsis thaliana (Mouse-ear cress), this protein is Putative pentatricopeptide repeat-containing protein At5g47460 (PCMP-E103).